A 420-amino-acid chain; its full sequence is Glutamyl-tRNA reductase (420 aa).

Residues 49-52 (TCNR), Ser109, 114-116 (EPQ), and Gln120 contribute to the substrate site. Catalysis depends on Cys50, which acts as the Nucleophile. 189–194 (GAGETI) contacts NADP(+).

Belongs to the glutamyl-tRNA reductase family. As to quaternary structure, homodimer.

The catalysed reaction is (S)-4-amino-5-oxopentanoate + tRNA(Glu) + NADP(+) = L-glutamyl-tRNA(Glu) + NADPH + H(+). It participates in porphyrin-containing compound metabolism; protoporphyrin-IX biosynthesis; 5-aminolevulinate from L-glutamyl-tRNA(Glu): step 1/2. In terms of biological role, catalyzes the NADPH-dependent reduction of glutamyl-tRNA(Glu) to glutamate 1-semialdehyde (GSA). The protein is Glutamyl-tRNA reductase of Yersinia pseudotuberculosis serotype O:1b (strain IP 31758).